The primary structure comprises 144 residues: Protein cornichon homolog 1 (144 aa).

Topologically, residues 1-10 (MAFTFAAFCY) are cytoplasmic. The helical transmembrane segment at 11–31 (MLALLLTATLIFFAIWHIIAF) threads the bilayer. Topologically, residues 32–56 (DELKTDYKNPIDQCNTLNPLVLPEY) are lumenal. A helical membrane pass occupies residues 57-77 (LIHAFFCVMFLCAAEWLTLGL). Topologically, residues 78–122 (NMPLLAYHIWRYMSRPVMSGPGLYDPTTIMNADILAYCQKEGWCK) are cytoplasmic. The helical transmembrane segment at 123 to 143 (LAFYLLAFFYYLYGMIYVLVS) threads the bilayer. Position 144 (Ser-144) is a topological domain, lumenal.

The protein belongs to the cornichon family. In terms of assembly, interacts with AREG immature precursor and with immature TGFA, i.e. with a prosegment and lacking full N-glycosylation, but not with the fully N-glycosylated form. In the Golgi apparatus, may form a complex with GORASP55 and transmembrane TGFA.

It is found in the endoplasmic reticulum membrane. It localises to the golgi apparatus membrane. In terms of biological role, involved in the selective transport and maturation of TGF-alpha family proteins. This is Protein cornichon homolog 1 (CNIH1) from Pongo abelii (Sumatran orangutan).